The following is a 117-amino-acid chain: Large ribosomal subunit protein uL18 (117 aa).

This sequence belongs to the universal ribosomal protein uL18 family. Part of the 50S ribosomal subunit; part of the 5S rRNA/L5/L18/L25 subcomplex. Contacts the 5S and 23S rRNAs.

In terms of biological role, this is one of the proteins that bind and probably mediate the attachment of the 5S RNA into the large ribosomal subunit, where it forms part of the central protuberance. This Colwellia psychrerythraea (strain 34H / ATCC BAA-681) (Vibrio psychroerythus) protein is Large ribosomal subunit protein uL18.